The primary structure comprises 172 residues: Small ribosomal subunit protein uS5 (172 aa).

Residues 17 to 80 enclose the S5 DRBM domain; that stretch reads LREKMISVNR…EQARRNMFKV (64 aa).

Belongs to the universal ribosomal protein uS5 family. As to quaternary structure, part of the 30S ribosomal subunit. Contacts proteins S4 and S8.

In terms of biological role, with S4 and S12 plays an important role in translational accuracy. Functionally, located at the back of the 30S subunit body where it stabilizes the conformation of the head with respect to the body. This is Small ribosomal subunit protein uS5 from Burkholderia thailandensis (strain ATCC 700388 / DSM 13276 / CCUG 48851 / CIP 106301 / E264).